A 615-amino-acid chain; its full sequence is Threonine--tRNA ligase (615 aa).

The editing domain stretch occupies residues Met-1–Thr-132. A catalytic region spans residues Pro-196–Pro-495. Zn(2+)-binding residues include Cys-288, His-340, and His-464.

This sequence belongs to the class-II aminoacyl-tRNA synthetase family. As to quaternary structure, homodimer. It depends on Zn(2+) as a cofactor.

It localises to the cytoplasm. It catalyses the reaction tRNA(Thr) + L-threonine + ATP = L-threonyl-tRNA(Thr) + AMP + diphosphate + H(+). Its function is as follows. Catalyzes the attachment of threonine to tRNA(Thr) in a two-step reaction: L-threonine is first activated by ATP to form Thr-AMP and then transferred to the acceptor end of tRNA(Thr). Also edits incorrectly charged L-seryl-tRNA(Thr). The protein is Threonine--tRNA ligase (thrS) of Cenarchaeum symbiosum (strain A).